A 562-amino-acid polypeptide reads, in one-letter code: MDDNKRPLYLPFAGPAILEAPLINKGSAFSEEERIFFNLEGLVPYAIETIEEQASRAYDQFRSFNNDLDKHIYLRNIQDTNETLFYRLVQNHISEMMPIIYTPTVGLACERFSKNYRRNRGLFISYPNKDRIDDILNNSTRQKVKIIVVTDGERILGLGDQGIGGMGIPIGKLSLYTSCGGISPAYTLPITLDVGTDNPQLLEDPMYMGWRHPRIGGEEYAEFIEAFMQAVHVRWPDTLIQFEDFAQKNAMPILERYKDRYCCFNDDIQGTAAVTVGSLLAACKAAGTELNKQRIAFLGAGSAGCGIAEAIVAQMVSEGISDEQARSQVCMVDRWGLLLDNMPNLLPFQQKLAQKCADICNWNNFSDNISLLDVVNNAKPTVLIGVSGAPGLFTEEIVRAMHSHCERPIIFPLSNPTSRVEATPKDILHWTSGQALVATGSPFEPVVVDGETYEIAQCNNSFIFPGIGLGVLASGARHVSDAMLMASSRALAECSPLAINGSGPLLPKLEDIHSVSKHIAFAVGKVAIEQGLSLPASDELLMQSIEDNFWKPEYRRYKRTSF.

Tyr-101 (proton donor) is an active-site residue. Arg-154 is a binding site for NAD(+). The Proton acceptor role is filled by Lys-172. Glu-243, Asp-244, and Asp-267 together coordinate a divalent metal cation. The NAD(+) site is built by Asp-267 and Asn-415.

Belongs to the malic enzymes family. Homotetramer. Mg(2+) is required as a cofactor. Mn(2+) serves as cofactor.

It catalyses the reaction (S)-malate + NAD(+) = pyruvate + CO2 + NADH. The enzyme catalyses oxaloacetate + H(+) = pyruvate + CO2. The protein is NAD-dependent malic enzyme of Shewanella sp. (strain ANA-3).